The primary structure comprises 48 residues: Sperm protamine P1 (48 aa).

It belongs to the protamine P1 family. In terms of tissue distribution, testis.

It localises to the nucleus. Its subcellular location is the chromosome. Its function is as follows. Protamines substitute for histones in the chromatin of sperm during the haploid phase of spermatogenesis. They compact sperm DNA into a highly condensed, stable and inactive complex. The chain is Sperm protamine P1 (PRM1) from Corynorhinus townsendii (Townsend's big-eared bat).